The chain runs to 198 residues: Holliday junction resolvase RecU (198 aa).

Positions 1–21 (MVNYPHKLSSQKRQPSLSQPK) are disordered. Over residues 11-21 (QKRQPSLSQPK) the composition is skewed to polar residues. Mg(2+) contacts are provided by Thr81, Asp83, Glu96, and Gln115.

Belongs to the RecU family. Mg(2+) is required as a cofactor.

The protein localises to the cytoplasm. It catalyses the reaction Endonucleolytic cleavage at a junction such as a reciprocal single-stranded crossover between two homologous DNA duplexes (Holliday junction).. Functionally, endonuclease that resolves Holliday junction intermediates in genetic recombination. Cleaves mobile four-strand junctions by introducing symmetrical nicks in paired strands. Promotes annealing of linear ssDNA with homologous dsDNA. Required for DNA repair, homologous recombination and chromosome segregation. The polypeptide is Holliday junction resolvase RecU (Streptococcus pneumoniae (strain Taiwan19F-14)).